The chain runs to 153 residues: Probable inactive ribonuclease-like protein 13 (153 aa).

The signal sequence occupies residues 1 to 22 (MAPDVAWLLVLPLVFRPTLVTG).

This sequence belongs to the pancreatic ribonuclease family.

Its subcellular location is the secreted. Its function is as follows. Does not exhibit any ribonuclease activity. The sequence is that of Probable inactive ribonuclease-like protein 13 (Rnase13) from Mus musculus (Mouse).